The chain runs to 130 residues: Holo-[acyl-carrier-protein] synthase (130 aa).

Mg(2+)-binding residues include D9 and E58.

Belongs to the P-Pant transferase superfamily. AcpS family. Requires Mg(2+) as cofactor.

The protein resides in the cytoplasm. It catalyses the reaction apo-[ACP] + CoA = holo-[ACP] + adenosine 3',5'-bisphosphate + H(+). Functionally, transfers the 4'-phosphopantetheine moiety from coenzyme A to a Ser of acyl-carrier-protein. The polypeptide is Holo-[acyl-carrier-protein] synthase (Mycobacterium sp. (strain JLS)).